Here is a 642-residue protein sequence, read N- to C-terminus: Fimbrin (642 aa).

2 EF-hand domains span residues 16-50 (EDLF…KDGD) and 51-86 (ATYD…LRES). The Ca(2+) site is built by Asp29, Asp31, Trp35, Asp66, Ser68, Arg70, and Asp75. Actin-binding stretches follow at residues 125-394 (IVAG…GLEP) and 395-642 (IQEE…TLNK). 4 consecutive Calponin-homology (CH) domains span residues 139–259 (EEER…RRGL), 287–390 (LPPE…NTHP), 411–521 (EREA…RRNI), and 534–642 (DMSD…TLNK).

Its function is as follows. Binds to actin, and functionally associates with actin structures involved in the development and maintenance of cell polarity. The chain is Fimbrin (SAC6) from Saccharomyces cerevisiae (strain ATCC 204508 / S288c) (Baker's yeast).